Here is a 137-residue protein sequence, read N- to C-terminus: ATP synthase epsilon chain (137 aa).

Belongs to the ATPase epsilon chain family. F-type ATPases have 2 components, CF(1) - the catalytic core - and CF(0) - the membrane proton channel. CF(1) has five subunits: alpha(3), beta(3), gamma(1), delta(1), epsilon(1). CF(0) has three main subunits: a, b and c.

Its subcellular location is the cellular thylakoid membrane. In terms of biological role, produces ATP from ADP in the presence of a proton gradient across the membrane. This chain is ATP synthase epsilon chain, found in Nostoc punctiforme (strain ATCC 29133 / PCC 73102).